We begin with the raw amino-acid sequence, 981 residues long: Mineralocorticoid receptor (981 aa).

Residues 1–603 (METKGYHSLP…STGSSRPSKI (603 aa)) are modulating. The segment covering 234–258 (SLTCSPSVENRGSRSHSPTHASNVG) has biased composition (polar residues). 2 disordered regions span residues 234-331 (SLTC…ASTV) and 355-376 (AIQD…VPFP). Phosphoserine occurs at positions 250, 259, 283, 287, and 299. 2 stretches are compositionally biased toward low complexity: residues 259–300 (SPLS…VSSP) and 309–327 (SVSS…SSPT). The Zn(2+) site is built by C604, C607, C621, C624, C640, C646, C656, and C659. 2 NR C4-type zinc fingers span residues 604 to 624 (CLVC…CGSC) and 640 to 664 (CAGR…LQKC). The segment at residues 604–669 (CLVCGDEASG…RLQKCLQAGM (66 aa)) is a DNA-binding region (nuclear receptor). The interval 670-722 (NLGARKSKKLGKLKGLHEEQPQQPPPPPPQSPEEGTTYIAPTKEPSVNSALVP) is hinge. The segment at 684–710 (GLHEEQPQQPPPPPPQSPEEGTTYIAP) is disordered. The span at 691-700 (QQPPPPPPQS) shows a compositional bias: pro residues. An NR LBD domain is found at 723–961 (QLTSITHALT…EFPAMLVEII (239 aa)). 2 residues coordinate 21-hydroxyprogesterone: N767 and Q773. Residues N767 and Q773 each coordinate aldosterone. N767 and Q773 together coordinate progesterone. Residues 779–782 (KWAK) are important for coactivator binding. Residues R814 and T942 each contribute to the 21-hydroxyprogesterone site. Aldosterone contacts are provided by R814 and T942. Positions 814 and 942 each coordinate progesterone.

Belongs to the nuclear hormone receptor family. NR3 subfamily. As to quaternary structure, heteromultimeric cytoplasmic complex with HSP90, HSP70, and FKBP4, in the absence of ligand. After ligand binding, it translocates to the nucleus and binds to DNA as a homodimer and as a heterodimer with NR3C1. Binds the coactivator NCOA2. May interact with HSD11B2 in the absence of ligand. Binds the coactivators NCOA1, TIF1 and NRIP1. Phosphorylated. In terms of tissue distribution, detected in liver, brain, heart, kidney, colon, aorta, hippocampus, hypothalamus and adrenal fasciculata.

The protein resides in the cytoplasm. It is found in the nucleus. It localises to the endoplasmic reticulum membrane. Receptor for both mineralocorticoids (MC) such as aldosterone and glucocorticoids (GC) such as corticosterone or cortisol. Binds to mineralocorticoid response elements (MRE) and transactivates target genes. The effect of MC is to increase ion and water transport and thus raise extracellular fluid volume and blood pressure and lower potassium levels. The chain is Mineralocorticoid receptor (Nr3c2) from Rattus norvegicus (Rat).